The following is a 676-amino-acid chain: ATP-dependent zinc metalloprotease FTSH 2, chloroplastic (676 aa).

The N-terminal 32 residues, 1–32 (MAPTSMSLAAKTPLPFSTLPSSGVAQRPVSVT), are a transit peptide targeting the chloroplast. The chain crosses the membrane as a helical span at residues 155–175 (LLFNLIGNLAFPLILIGGLFL). 254 to 261 (GPPGTGKT) lines the ATP pocket. Zn(2+) is bound at residue His-475. The active site involves Glu-476. 2 residues coordinate Zn(2+): His-479 and Asp-553.

The protein in the N-terminal section; belongs to the AAA ATPase family. In the C-terminal section; belongs to the peptidase M41 family. Zn(2+) serves as cofactor.

The protein localises to the plastid. It localises to the chloroplast thylakoid membrane. Probable ATP-dependent zinc metallopeptidase. This is ATP-dependent zinc metalloprotease FTSH 2, chloroplastic (FTSH2) from Oryza sativa subsp. japonica (Rice).